The following is a 51-amino-acid chain: MVYRRRRSRSADGTYTRRRRSSGYRRRPGRPRTYRRSRSATRRSGYRRRRY.

The disordered stretch occupies residues 1–51; the sequence is MVYRRRRSRSADGTYTRRRRSSGYRRRPGRPRTYRRSRSATRRSGYRRRRY. Tandem repeats lie at residues 5 to 10 and 17 to 22. Positions 5–22 are 2 X 6 AA repeats of R-R-R-R-S-S; the sequence is RRRSRSADGTYTRRRRSS. The segment covering 16 to 51 has biased composition (basic residues); it reads TRRRRSSGYRRRPGRPRTYRRSRSATRRSGYRRRRY.

In terms of processing, probably phosphorylated in infected cells.

Its subcellular location is the virion. Functionally, thought to be responsible for DNA condensation during packaging of the nucleocapsids. This Orgyia pseudotsugata (Douglas-fir tussock moth) protein is DNA-binding protein (P6.5).